Reading from the N-terminus, the 27-residue chain is Cupiennin-3a (27 aa).

A Glutamic acid 1-amide modification is found at Glu-27.

Expressed by the venom gland.

Its subcellular location is the secreted. This chain is Cupiennin-3a, found in Cupiennius salei (American wandering spider).